The chain runs to 334 residues: Broad-range acid phosphatase DET1 (334 aa).

His32 functions as the Tele-phosphohistidine intermediate in the catalytic mechanism. Residues Asn38, 44 to 45 (NG), and Arg108 contribute to the substrate site. Glu126 (proton donor/acceptor) is an active-site residue. Residues 168-171 (LNNT) and 195-205 (RVKDEPRIREQ) each bind substrate. Ser248 is modified (phosphoserine).

The protein belongs to the phosphoglycerate mutase family.

It localises to the cytoplasm. The protein localises to the nucleus. Metal-independent, broad-range acid phosphatase. Involved, either directly or indirectly, in the bidirectional transport of sterols between the endoplasmic reticulum and the plasma membrane. The sequence is that of Broad-range acid phosphatase DET1 (DET1) from Saccharomyces cerevisiae (strain ATCC 204508 / S288c) (Baker's yeast).